Consider the following 122-residue polypeptide: Large ribosomal subunit protein bL12 (122 aa).

It belongs to the bacterial ribosomal protein bL12 family. Homodimer. Part of the ribosomal stalk of the 50S ribosomal subunit. Forms a multimeric L10(L12)X complex, where L10 forms an elongated spine to which 2 to 4 L12 dimers bind in a sequential fashion. Binds GTP-bound translation factors.

In terms of biological role, forms part of the ribosomal stalk which helps the ribosome interact with GTP-bound translation factors. Is thus essential for accurate translation. The protein is Large ribosomal subunit protein bL12 of Pseudomonas entomophila (strain L48).